We begin with the raw amino-acid sequence, 289 residues long: Mitochondrial fission regulator 1-like (289 aa).

A Phosphothreonine modification is found at Thr27. Phosphoserine occurs at positions 38, 100, 107, 221, 222, 235, 258, and 270.

Belongs to the MTFR1 family. Phosphorylated by AMPK. Upon stress, phosphorylation by AMPK is sufficient to induce mitochondrial fragmentation.

The protein resides in the mitochondrion outer membrane. In terms of biological role, mitochondrial protein required for adaptation of miochondrial dynamics to metabolic changes. Regulates mitochondrial morphology at steady state and mediates AMPK-dependent stress-induced mitochondrial fragmentation via the control of OPA1 levels. This chain is Mitochondrial fission regulator 1-like (Mtfr1l), found in Rattus norvegicus (Rat).